The sequence spans 81 residues: Photosystem I iron-sulfur center (81 aa).

4Fe-4S ferredoxin-type domains lie at 2-31 (SHSV…MIPW) and 39-68 (IAPA…VRVY). [4Fe-4S] cluster contacts are provided by Cys11, Cys14, Cys17, Cys21, Cys48, Cys51, Cys54, and Cys58.

As to quaternary structure, the eukaryotic PSI reaction center is composed of at least 11 subunits. [4Fe-4S] cluster is required as a cofactor.

The protein localises to the plastid. Its subcellular location is the chloroplast thylakoid membrane. The catalysed reaction is reduced [plastocyanin] + hnu + oxidized [2Fe-2S]-[ferredoxin] = oxidized [plastocyanin] + reduced [2Fe-2S]-[ferredoxin]. Apoprotein for the two 4Fe-4S centers FA and FB of photosystem I (PSI); essential for photochemical activity. FB is the terminal electron acceptor of PSI, donating electrons to ferredoxin. The C-terminus interacts with PsaA/B/D and helps assemble the protein into the PSI complex. Required for binding of PsaD and PsaE to PSI. PSI is a plastocyanin-ferredoxin oxidoreductase, converting photonic excitation into a charge separation, which transfers an electron from the donor P700 chlorophyll pair to the spectroscopically characterized acceptors A0, A1, FX, FA and FB in turn. The chain is Photosystem I iron-sulfur center from Chloranthus spicatus (Chulantree).